Here is a 395-residue protein sequence, read N- to C-terminus: S-adenosylmethionine synthase (395 aa).

H12 provides a ligand contact to ATP. D14 is a binding site for Mg(2+). K(+) is bound at residue E40. The L-methionine site is built by E53 and Q96. A flexible loop region spans residues 96–106; the sequence is QSKEIADAVNF. ATP-binding positions include 174–176, 242–243, D251, 257–258, A274, and K278; these read DGK, RF, and RK. Residue D251 participates in L-methionine binding. K282 is an L-methionine binding site.

The protein belongs to the AdoMet synthase family. As to quaternary structure, homotetramer; dimer of dimers. It depends on Mg(2+) as a cofactor. Requires K(+) as cofactor.

It localises to the cytoplasm. The enzyme catalyses L-methionine + ATP + H2O = S-adenosyl-L-methionine + phosphate + diphosphate. Its pathway is amino-acid biosynthesis; S-adenosyl-L-methionine biosynthesis; S-adenosyl-L-methionine from L-methionine: step 1/1. Catalyzes the formation of S-adenosylmethionine (AdoMet) from methionine and ATP. The overall synthetic reaction is composed of two sequential steps, AdoMet formation and the subsequent tripolyphosphate hydrolysis which occurs prior to release of AdoMet from the enzyme. This chain is S-adenosylmethionine synthase, found in Tropheryma whipplei (strain Twist) (Whipple's bacillus).